Reading from the N-terminus, the 679-residue chain is Stress-70 protein, mitochondrial (679 aa).

The N-terminal 46 residues, 1 to 46 (MISASRAVAARLVGAAASRGPTAARHQDGWNGLSHEAFRIVSRRDY), are a transit peptide targeting the mitochondrion. Residues 1 to 432 (MISASRAVAA…IQGGVLAGDV (432 aa)) form an interaction with NFS1 region. ADP-binding residues include Thr-63 and Asn-64. The tract at residues 63-431 (TNSCVAVMEG…AIQGGVLAGD (369 aa)) is nucleotide-binding domain (NBD). Lys-76 is modified (N6-acetyllysine). Thr-87 bears the Phosphothreonine mark. 2 positions are modified to N6-acetyllysine; alternate: Lys-135 and Lys-138. N6-succinyllysine; alternate is present on residues Lys-135 and Lys-138. The residue at position 143 (Lys-143) is an N6-acetyllysine. Lys-206 bears the N6-acetyllysine; alternate mark. Lys-206 bears the N6-succinyllysine; alternate mark. At Lys-206 the chain carries N6-malonyllysine; alternate. 2 positions are modified to N6-acetyllysine: Lys-234 and Lys-288. The residue at position 300 (Lys-300) is an N6-acetyllysine; alternate. N6-succinyllysine; alternate is present on Lys-300. The ADP site is built by Glu-313, Lys-316, and Ser-320. The residue at position 368 (Lys-368) is an N6-succinyllysine. Positions 388 and 391 each coordinate ADP. Lys-394 bears the N6-succinyllysine mark. Residue Ser-408 is modified to Phosphoserine. An interdomain linker region spans residues 432-441 (VTDVLLLDVT). An interaction with FXN and ISCU region spans residues 432 to 679 (VTDVLLLDVT…QKEDQKEEKQ (248 aa)). The tract at residues 442 to 679 (PLSLGIETLG…QKEDQKEEKQ (238 aa)) is substrate-binding domain (SBD). Residue Arg-513 is modified to Omega-N-methylarginine. N6-acetyllysine; alternate occurs at positions 567 and 600. Residues Lys-567 and Lys-600 each carry the N6-succinyllysine; alternate modification. Position 610 is an N6-succinyllysine (Lys-610). Lys-612 bears the N6-acetyllysine mark. Lys-646 is modified (N6-acetyllysine; alternate). An N6-succinyllysine; alternate modification is found at Lys-646. A disordered region spans residues 656-679 (ASEREGSGSSGTGEQKEDQKEEKQ). The span at 669–679 (EQKEDQKEEKQ) shows a compositional bias: basic and acidic residues.

This sequence belongs to the heat shock protein 70 family. Interacts strongly with the intermediate form of FXN and weakly with its mature form. Interacts with HSCB. Associates with the mitochondrial contact site and cristae organizing system (MICOS) complex, composed of at least MICOS10/MIC10, CHCHD3/MIC19, CHCHD6/MIC25, APOOL/MIC27, IMMT/MIC60, APOO/MIC23/MIC26 and QIL1/MIC13. This complex was also known under the names MINOS or MitOS complex. The MICOS complex associates with mitochondrial outer membrane proteins SAMM50, MTX1, MTX2 and DNAJC11, mitochondrial inner membrane protein TMEM11 and with HSPA9. Interacts with DNLZ, the interaction is required to prevent self-aggregation. Interacts with TESPA1. Interacts with PDPN. Interacts with NFU1, NFS1 and ISCU. Interacts with TP53; the interaction promotes TP53 degradation. Interacts (via SBD domain) with UBXN2A; the interaction with UBXN2A inhibits HSPA9/MOT-2 interaction with and degradation of TP53, thereby promotes TP53 translocation to the nucleus. Interacts with ITPR1 AND VDAC1; this interaction couples ITPR1 to VDAC1. Component of the TIM23 mitochondrial inner membrane pre-sequence translocase complex.

It is found in the mitochondrion. The protein localises to the nucleus. The protein resides in the nucleolus. It localises to the cytoplasm. Its subcellular location is the mitochondrion matrix. It carries out the reaction ATP + H2O = ADP + phosphate + H(+). Its activity is regulated as follows. The chaperone activity is regulated by ATP-induced allosteric coupling of the nucleotide-binding (NBD) and substrate-binding (SBD) domains. ATP binding in the nucleotide-binding pocket (NBP) leads to a conformational change in the NBD, which is transferred through the interdomain linker (IDL) to the substrate-binding domain (SBD). This elicits a reduced substrate affinity and a faster substrate exchange rate. Upon hydrolysis of ATP to ADP, the protein undergoes a conformational change that increases its affinity for substrate proteins. It cycles through repeated phases of ATP hydrolysis and nucleotide exchange, facilitating repeated cycles of substrate binding and release. Functions in collaboration with co-chaperones. Functions with the co-chaperone, DNLZ, to maintain solubility and regulate ATP hydrolysis. Nucleotide exchange factors, GRPEL1 and GRPEL2, accelerate nucleotide exchange. Its function is as follows. Mitochondrial chaperone that plays a key role in mitochondrial protein import, folding, and assembly. Plays an essential role in the protein quality control system, the correct folding of proteins, the re-folding of misfolded proteins, and the targeting of proteins for subsequent degradation. These processes are achieved through cycles of ATP binding, ATP hydrolysis, and ADP release, mediated by co-chaperones. In mitochondria, it associates with the TIM (translocase of the inner membrane) protein complex to assist in the import and folding of mitochondrial proteins. Plays an important role in mitochondrial iron-sulfur cluster (ISC) biogenesis, interacts with and stabilizes ISC cluster assembly proteins FXN, NFU1, NFS1 and ISCU. Regulates erythropoiesis via stabilization of ISC assembly. Regulates mitochondrial calcium-dependent apoptosis by coupling two calcium channels, ITPR1 and VDAC1, at the mitochondria-associated endoplasmic reticulum (ER) membrane to facilitate calcium transport from the ER lumen to the mitochondria intermembrane space, providing calcium for the downstream calcium channel MCU, which releases it into the mitochondrial matrix. Although primarily located in the mitochondria, it is also found in other cellular compartments. In the cytosol, it associates with proteins involved in signaling, apoptosis, or senescence. It may play a role in cell cycle regulation via its interaction with and promotion of degradation of TP53. May play a role in the control of cell proliferation and cellular aging. Protects against reactive oxygen species (ROS). Extracellular HSPA9 plays a cytoprotective role by preventing cell lysis following immune attack by the membrane attack complex by disrupting formation of the complex. This is Stress-70 protein, mitochondrial from Pongo abelii (Sumatran orangutan).